The chain runs to 248 residues: MIVLVTGATAGFGECITRRFIQQGHKVIATGRRQERLQELKDELGDNLYIAQLDVRNRAAIEEMLASLPAEWSNIDILVNNAGLALGMEPAHKASIEDWETMIDTNNKGLVYMTRAVLPGMVERNHGHIINIGSTAGSWPYAGGNVYGATKAFVRQFSLNLRTDLHGTAVRVTDIEPGLVGGTEFSNVRFKGDDGKAEKTYQNTVALTPEDVSEAVWWVSTLPAHVNINTLEMMPVTQSYAGLNVHRQ.

Residues 7–12 (GATAGF), 32–33 (RR), 54–55 (DV), and Asn81 contribute to the NADP(+) site. Ser134 contacts substrate. Residues Tyr147, Lys151, and 177-185 (PGLVGGTEF) each bind NADP(+). Tyr147 (proton acceptor) is an active-site residue.

The protein belongs to the short-chain dehydrogenases/reductases (SDR) family. In terms of assembly, homotetramer.

The enzyme catalyses 3-hydroxypropanoate + NADP(+) = 3-oxopropanoate + NADPH + H(+). It catalyses the reaction L-allo-threonine + NADP(+) = aminoacetone + CO2 + NADPH. NADP-dependent dehydrogenase with broad substrate specificity acting on 3-hydroxy acids. Catalyzes the NADP-dependent oxidation of L-allo-threonine to L-2-amino-3-keto-butyrate, which is spontaneously decarboxylated into aminoacetone. Also acts on D-threonine, L-serine, D-serine, D-3-hydroxyisobutyrate, L-3-hydroxyisobutyrate, D-glycerate and L-glycerate. Able to catalyze the reduction of the malonic semialdehyde to 3-hydroxypropionic acid. YdfG is apparently supplementing RutE, the presumed malonic semialdehyde reductase involved in pyrimidine degradation since both are able to detoxify malonic semialdehyde. The sequence is that of NADP-dependent 3-hydroxy acid dehydrogenase YdfG from Escherichia coli O6:H1 (strain CFT073 / ATCC 700928 / UPEC).